Here is a 131-residue protein sequence, read N- to C-terminus: Holo-[acyl-carrier-protein] synthase (131 aa).

Mg(2+)-binding residues include Asp-8 and Glu-63.

Belongs to the P-Pant transferase superfamily. AcpS family. It depends on Mg(2+) as a cofactor.

It localises to the cytoplasm. The enzyme catalyses apo-[ACP] + CoA = holo-[ACP] + adenosine 3',5'-bisphosphate + H(+). Transfers the 4'-phosphopantetheine moiety from coenzyme A to a Ser of acyl-carrier-protein. The polypeptide is Holo-[acyl-carrier-protein] synthase (Shewanella halifaxensis (strain HAW-EB4)).